The chain runs to 380 residues: Genome polyprotein (380 aa).

Disordered stretches follow at residues 54–154 and 349–380; these read GTVD…TGKI and GNVG…QQHH. A compositionally biased stretch (low complexity) spans 67 to 84; it reads QGTTPPATGSGAKPATSG. Composition is skewed to gly residues over residues 85–99 and 106–123; these read AGSG…GVTG and SGTG…GSGS. Residues 129 to 140 are compositionally biased toward low complexity; it reads NTGSAGTNATGG.

The protein belongs to the potyviridae genome polyprotein family. Genome polyprotein of potyviruses undergoes post-translational proteolytic processing by the main proteinase NIa-pro resulting in the production of at least ten individual proteins. The P1 proteinase and the HC-pro cleave only their respective C-termini autocatalytically. 6K1 is essential for proper proteolytic separation of P3 from CI.

The protein resides in the virion. The enzyme catalyses RNA(n) + a ribonucleoside 5'-triphosphate = RNA(n+1) + diphosphate. In terms of biological role, an RNA-dependent RNA polymerase that plays an essential role in the virus replication. Its function is as follows. Involved in aphid transmission, cell-to-cell and systemis movement, encapsidation of the viral RNA and in the regulation of viral RNA amplification. This is Genome polyprotein from Sorghum halepense (Johnson grass).